We begin with the raw amino-acid sequence, 602 residues long: 3-hydroxy-3-methylglutaryl-coenzyme A reductase 2 (602 aa).

The next 2 helical transmembrane spans lie at 44 to 67 and 95 to 115; these read ASDA…FFSV and AIVS…IGFV. The tract at residues 116 to 187 is linker; that stretch reads QTFVSRGNND…PLITSASSGE (72 aa). A glycan (N-linked (GlcNAc...) asparagine) is linked at Asn-124. The catalytic stretch occupies residues 188–602; sequence DEEIIKSVVQ…STKDVTKASS (415 aa). Glu-281 acts as the Charge relay system in catalysis. An N-linked (GlcNAc...) asparagine glycan is attached at Asn-345. Lys-413 functions as the Charge relay system in the catalytic mechanism. Asn-458 carries an N-linked (GlcNAc...) asparagine glycan. Asp-489 serves as the catalytic Charge relay system. His-587 acts as the Proton donor in catalysis. Asn-591 carries N-linked (GlcNAc...) asparagine glycosylation.

Belongs to the HMG-CoA reductase family.

It localises to the endoplasmic reticulum membrane. The enzyme catalyses (R)-mevalonate + 2 NADP(+) + CoA = (3S)-3-hydroxy-3-methylglutaryl-CoA + 2 NADPH + 2 H(+). The protein operates within metabolic intermediate biosynthesis; (R)-mevalonate biosynthesis; (R)-mevalonate from acetyl-CoA: step 3/3. In terms of biological role, catalyzes the synthesis of mevalonate. The specific precursor of all isoprenoid compounds present in plants. This chain is 3-hydroxy-3-methylglutaryl-coenzyme A reductase 2 (HMG2), found in Solanum lycopersicum (Tomato).